We begin with the raw amino-acid sequence, 337 residues long: ATP-dependent 6-phosphofructokinase (337 aa).

G11 contacts ATP. 21–25 (RAVVR) contributes to the ADP binding site. Residues 72–73 (RY) and 102–105 (GDGS) each bind ATP. D103 is a binding site for Mg(2+). 125–127 (TID) serves as a coordination point for substrate. D127 serves as the catalytic Proton acceptor. R154 contributes to the ADP binding site. Substrate is bound by residues R162 and 169–171 (MGR). Residues 185–187 (GAD), K212, and 214–216 (KNH) contribute to the ADP site. Residues E223, R245, and 251 to 254 (HILR) contribute to the substrate site.

Belongs to the phosphofructokinase type A (PFKA) family. ATP-dependent PFK group I subfamily. Prokaryotic clade 'B1' sub-subfamily. Homotetramer. Mg(2+) is required as a cofactor.

It is found in the cytoplasm. It catalyses the reaction beta-D-fructose 6-phosphate + ATP = beta-D-fructose 1,6-bisphosphate + ADP + H(+). It functions in the pathway carbohydrate degradation; glycolysis; D-glyceraldehyde 3-phosphate and glycerone phosphate from D-glucose: step 3/4. Its activity is regulated as follows. Allosterically activated by ADP and other diphosphonucleosides, and allosterically inhibited by phosphoenolpyruvate. Catalyzes the phosphorylation of D-fructose 6-phosphate to fructose 1,6-bisphosphate by ATP, the first committing step of glycolysis. This chain is ATP-dependent 6-phosphofructokinase, found in Streptococcus pyogenes serotype M3 (strain SSI-1).